The following is a 440-amino-acid chain: Xaa-Pro dipeptidase (440 aa).

5 residues coordinate Mn(2+): aspartate 244, aspartate 255, histidine 335, glutamate 380, and glutamate 419.

This sequence belongs to the peptidase M24B family. Bacterial-type prolidase subfamily. It depends on Mn(2+) as a cofactor.

It catalyses the reaction Xaa-L-Pro dipeptide + H2O = an L-alpha-amino acid + L-proline. Splits dipeptides with a prolyl residue in the C-terminal position. The polypeptide is Xaa-Pro dipeptidase (Shewanella baltica (strain OS195)).